The sequence spans 304 residues: Aspartate carbamoyltransferase catalytic subunit (304 aa).

Residues Arg-49 and Thr-50 each coordinate carbamoyl phosphate. Lys-77 contacts L-aspartate. 3 residues coordinate carbamoyl phosphate: Arg-99, His-127, and Gln-130. L-aspartate-binding residues include Arg-160 and Arg-211. Carbamoyl phosphate is bound by residues Ala-252 and Pro-253.

It belongs to the aspartate/ornithine carbamoyltransferase superfamily. ATCase family. Heterododecamer (2C3:3R2) of six catalytic PyrB chains organized as two trimers (C3), and six regulatory PyrI chains organized as three dimers (R2).

It carries out the reaction carbamoyl phosphate + L-aspartate = N-carbamoyl-L-aspartate + phosphate + H(+). It participates in pyrimidine metabolism; UMP biosynthesis via de novo pathway; (S)-dihydroorotate from bicarbonate: step 2/3. Catalyzes the condensation of carbamoyl phosphate and aspartate to form carbamoyl aspartate and inorganic phosphate, the committed step in the de novo pyrimidine nucleotide biosynthesis pathway. This chain is Aspartate carbamoyltransferase catalytic subunit, found in Bacillus mycoides (strain KBAB4) (Bacillus weihenstephanensis).